We begin with the raw amino-acid sequence, 128 residues long: Glycine cleavage system H protein (128 aa).

The region spanning 23-105 is the Lipoyl-binding domain; the sequence is KVRIGITDFA…YEKAWMIVVE (83 aa). An N6-lipoyllysine modification is found at Lys64.

The protein belongs to the GcvH family. The glycine cleavage system is composed of four proteins: P, T, L and H. (R)-lipoate is required as a cofactor.

Its function is as follows. The glycine cleavage system catalyzes the degradation of glycine. The H protein shuttles the methylamine group of glycine from the P protein to the T protein. Is also involved in protein lipoylation via its role as an octanoyl/lipoyl carrier protein intermediate. The chain is Glycine cleavage system H protein from Halalkalibacterium halodurans (strain ATCC BAA-125 / DSM 18197 / FERM 7344 / JCM 9153 / C-125) (Bacillus halodurans).